The following is a 53-amino-acid chain: Toxin CjTL7 (53 aa).

Positions 1–22 are cleaved as a signal peptide; it reads MMIKVLLLLSSALVLFTPEAEG. The residue at position 51 (Trp-51) is a Tryptophan amide.

Post-translationally, contains 4 disulfide bonds.

It localises to the secreted. Its subcellular location is the nematocyst. Its function is as follows. In vivo, only causes a weak change in behavior in shrimps (C.multidentata) (slight twitching of the walking legs), but no lethal effect is observed. No activity is observed when injected into fly larvae (M.domestica). This is Toxin CjTL7 from Epiactis japonica (Sea anemone).